Reading from the N-terminus, the 110-residue chain is Large ribosomal subunit protein eL34 (110 aa).

Residues 1–41 are disordered; that stretch reads MKNVLIHKGATYKTRSNRRRKVRTPSGKLVNRRVKKHSKKH. The segment covering 30–41 has biased composition (basic residues); the sequence is VNRRVKKHSKKH.

This sequence belongs to the eukaryotic ribosomal protein eL34 family.

This Encephalitozoon cuniculi (strain GB-M1) (Microsporidian parasite) protein is Large ribosomal subunit protein eL34 (RPL34).